A 392-amino-acid polypeptide reads, in one-letter code: Protein-glutamate methylesterase/protein-glutamine glutaminase (392 aa).

Residues 9-126 (TVLIVDDSPF…GADIQALARD (118 aa)) form the Response regulatory domain. Asp-60 bears the 4-aspartylphosphate mark. Positions 148–194 (VSRISSASGSRPPWTAGAASENTNRLSSPGSTSSTLGSAKGRSLDSG) are disordered. Low complexity predominate over residues 173 to 185 (LSSPGSTSSTLGS). The region spanning 198 to 392 (PKYPVEIVAI…RHIVECVQRR (195 aa)) is the CheB-type methylesterase domain. Active-site residues include Ser-210, His-237, and Asp-334.

The protein belongs to the CheB family. Phosphorylated by CheA. Phosphorylation of the N-terminal regulatory domain activates the methylesterase activity.

It is found in the cytoplasm. It carries out the reaction [protein]-L-glutamate 5-O-methyl ester + H2O = L-glutamyl-[protein] + methanol + H(+). It catalyses the reaction L-glutaminyl-[protein] + H2O = L-glutamyl-[protein] + NH4(+). Involved in chemotaxis. Part of a chemotaxis signal transduction system that modulates chemotaxis in response to various stimuli. Catalyzes the demethylation of specific methylglutamate residues introduced into the chemoreceptors (methyl-accepting chemotaxis proteins or MCP) by CheR. Also mediates the irreversible deamidation of specific glutamine residues to glutamic acid. This is Protein-glutamate methylesterase/protein-glutamine glutaminase from Desulfitobacterium hafniense (strain Y51).